The chain runs to 284 residues: MEMO1 family protein M1425_2054 (284 aa).

This sequence belongs to the MEMO1 family.

This is MEMO1 family protein M1425_2054 from Saccharolobus islandicus (strain M.14.25 / Kamchatka #1) (Sulfolobus islandicus).